The chain runs to 144 residues: Large ribosomal subunit protein uL14 (144 aa).

This sequence belongs to the universal ribosomal protein uL14 family. Part of the 50S ribosomal subunit. Forms a cluster with proteins L3 and L24e, part of which may contact the 16S rRNA in 2 intersubunit bridges.

Binds to 23S rRNA. Forms part of two intersubunit bridges in the 70S ribosome. This is Large ribosomal subunit protein uL14 from Pyrobaculum islandicum (strain DSM 4184 / JCM 9189 / GEO3).